The chain runs to 624 residues: MAIVSSVPLASKSCLHKSLISSIHKLKPFCRTIPTLGMSRPGKYVMPSMSMSSPVSDDGVQRRTGGYHSNLWNDDIIQFLSTPYGEPAYRERGERLIDEVKNMFNSISMEDVEFSPLNDLIQRLWIVDSVERLGIDRHFKNEIKSTLDYVYSYWTQKGIGCGIESVVPDLNSTALGLRTLRLHGYPVSAEVLKHFQNQNGQFACSPSETEGEMRSIVNLYRASLIAFPGEKVMEEAEIFSTKYLKEALQKIPVSSLSREIGDVLEQDWHTNLPRLEARNYIDVFGQDTKDTKLYMKTEKLLELAKLEFNIFQSLQKTELDSLLRWWKDSGFPHITFSRHLHVEYYTLASCIAFEPQHSRFRLGFAKACHVITILDDMYDVFGTIDELELFTAQIKRWDPSATDCLPKYMKRMYMILYDMVNEMSREAETAQGRDTLNYARQAWEDFIDSYMQEAKWIATGYLPTFDEYFENGKVSSGHRVAALQPILTMDIPFPHDILKEVDFPSKLNDLASAILRLRGDTRCYKADRARGEEASCISCYMKDNPGATEEDALSHINAVISDVIKGLNWELLNPNSSVPISSKKHVFDVSRALHYGYKYRDGYSVSNIETKSLVMRTLLESVPF.

A chloroplast-targeting transit peptide spans 1 to 48; sequence MAIVSSVPLASKSCLHKSLISSIHKLKPFCRTIPTLGMSRPGKYVMPS. Asp-375, Asp-379, and Asp-527 together coordinate Mg(2+). The short motif at 375 to 379 is the DDXXD motif element; that stretch reads DDMYD.

The protein belongs to the terpene synthase family. Tpsd subfamily. Requires Mg(2+) as cofactor. The cofactor is Mn(2+).

Its subcellular location is the plastid. It localises to the chloroplast. The catalysed reaction is (2E)-geranyl diphosphate = (-)-beta-phellandrene + diphosphate. It participates in terpene metabolism; oleoresin biosynthesis. Terpene synthase (TPS) involved in the biosynthesis of monoterpene natural products included in conifer oleoresin secretions and volatile emissions; these compounds contribute to biotic and abiotic stress defense against herbivores and pathogens. Catalyzes the conversion of (2E)-geranyl diphosphate (GPP) to (-)-beta-phellandrene. This is (-)-beta-phellandrene synthase 1, chloroplastic from Picea sitchensis (Sitka spruce).